A 486-amino-acid chain; its full sequence is Sensor protein PhoQ (486 aa).

Over 1-16 the chain is Cytoplasmic; that stretch reads MKKLLRLFFPLSLRVR. Residues 17 to 37 form a helical membrane-spanning segment; that stretch reads FLLATAAVVLVLSLAYGMVAL. Topologically, residues 38-194 are periplasmic; the sequence is IGYSVSFDKT…LKSSYMVWSW (157 aa). Residues aspartate 151 and aspartate 152 each contribute to the a divalent metal cation site. A helical transmembrane segment spans residues 195-215; the sequence is FIYVLSANLLLVIPLLWVAAW. Residues 215–266 enclose the HAMP domain; that stretch reads WWSLRPIEALAKEVRELEEHNRELLNPATTRELTSLVRNLNRLLKSERERYD. Topologically, residues 216–486 are cytoplasmic; sequence WSLRPIEALA…GRQHSAPKDE (271 aa). The Histidine kinase domain maps to 274–480; the sequence is DLTHSLKTPL…RMEVIFGRQH (207 aa). At histidine 277 the chain carries Phosphohistidine; by autocatalysis. Asparagine 385 provides a ligand contact to Mg(2+). Residues 385–393, 415–420, and 434–446 contribute to the ATP site; these read NVLDNACKY, DDGPGI, and RVDTLRPGQGVGL. Glutamine 442 is a Mg(2+) binding site.

As to quaternary structure, homodimer; probably dimerizes via the cytoplasmic domain. Probably interacts with MgrB in the periplasm, altering its activity and that of downstream effector PhoP.

It is found in the cell inner membrane. The catalysed reaction is ATP + protein L-histidine = ADP + protein N-phospho-L-histidine.. With respect to regulation, acetyl-CoA acts as a non-competitive inhibitor of the PhoQ autokinase activity. Feedback inhibited by MgrB, which seems to bind PhoQ, altering its activity and that of downstream effector PhoP. In terms of biological role, member of the two-component regulatory system PhoP/PhoQ involved in adaptation to low Mg(2+) environments and the control of acid resistance genes. In low periplasmic Mg(2+), PhoQ functions as a membrane-associated protein kinase that undergoes autophosphorylation and subsequently transfers the phosphate to PhoP, resulting in the expression of PhoP-activated genes (PAG) and repression of PhoP-repressed genes (PRG). In high periplasmic Mg(2+), acts as a protein phosphatase that dephosphorylates phospho-PhoP, resulting in the repression of PAG and may lead to expression of some PRG. PhoP-regulated transcription is redox-sensitive, being activated when the periplasm becomes more reducing (deletion of dsbA/dsbB, or treatment with dithiothreitol). MgrB acts between DsbA/DsbB and PhoP/PhoQ in this pathway; the 2 periplasmic Cys residues of MgrB are required for its action on PhoQ, which then acts on PhoP. Mediates magnesium influx to the cytosol by activation of mgtA. Promotes expression of the two-component regulatory system rstA/rstB and transcription of the hemL, mgrB, nagA, slyB, vboR and yrbL genes. The polypeptide is Sensor protein PhoQ (phoQ) (Escherichia coli (strain K12)).